The following is a 295-amino-acid chain: Cytidine deaminase (295 aa).

CMP/dCMP-type deaminase domains are found at residues 48–168 and 187–295; these read TDSE…FGPA and KETD…YVAA. Substrate is bound at residue 89–91; the sequence is NME. His-102 lines the Zn(2+) pocket. Catalysis depends on Glu-104, which acts as the Proton donor. Cys-129 and Cys-132 together coordinate Zn(2+).

The protein belongs to the cytidine and deoxycytidylate deaminase family. Homodimer. Zn(2+) serves as cofactor.

It catalyses the reaction cytidine + H2O + H(+) = uridine + NH4(+). The enzyme catalyses 2'-deoxycytidine + H2O + H(+) = 2'-deoxyuridine + NH4(+). In terms of biological role, this enzyme scavenges exogenous and endogenous cytidine and 2'-deoxycytidine for UMP synthesis. This is Cytidine deaminase from Photobacterium profundum (strain SS9).